The chain runs to 548 residues: Elongator complex protein 3 (548 aa).

Residues 83–373 form the Radical SAM core domain; it reads RTASGIAVVA…YRVQRDIPMP (291 aa). Residues cysteine 100, cysteine 110, and cysteine 113 each contribute to the [4Fe-4S] cluster site. Acetyl-CoA-binding positions include lysine 165, 475-478, 498-500, and tyrosine 531; these read ELHV and FGM. Positions 397–548 constitute an N-acetyltransferase domain; that stretch reads TECRDVRTRE…EGPYMVKNLY (152 aa).

The protein belongs to the ELP3 family. In terms of assembly, component of the elongator complex. Requires [4Fe-4S] cluster as cofactor.

The protein localises to the cytoplasm. The protein resides in the nucleus. It carries out the reaction uridine(34) in tRNA + acetyl-CoA + S-adenosyl-L-methionine + H2O = 5-(carboxymethyl)uridine(34) in tRNA + 5'-deoxyadenosine + L-methionine + CoA + 2 H(+). It functions in the pathway tRNA modification; 5-methoxycarbonylmethyl-2-thiouridine-tRNA biosynthesis. In terms of biological role, catalytic tRNA acetyltransferase subunit of the elongator complex which is required for multiple tRNA modifications, including mcm5U (5-methoxycarbonylmethyl uridine), mcm5s2U (5-methoxycarbonylmethyl-2-thiouridine), and ncm5U (5-carbamoylmethyl uridine). In the elongator complex, acts as a tRNA uridine(34) acetyltransferase by mediating formation of carboxymethyluridine in the wobble base at position 34 in tRNAs. Involved in neurogenesis. Involved in somite development. The polypeptide is Elongator complex protein 3 (Danio rerio (Zebrafish)).